The following is a 111-amino-acid chain: uncharacterized protein (111 aa).

A coiled-coil region spans residues 4 to 51; that stretch reads LGQVKVLEEKVAKAVHLVQMLKEENAALRAEIDGRGKRITELEQLVLX.

This is an uncharacterized protein from Treponema pallidum (strain Nichols).